The chain runs to 142 residues: Acidic phospholipase A2 KBf-grIB (142 aa).

7 disulfide bridges follow: Cys-28–Cys-94, Cys-44–Cys-141, Cys-46–Cys-62, Cys-61–Cys-122, Cys-68–Cys-115, Cys-78–Cys-108, and Cys-101–Cys-113. The Ca(2+) site is built by Tyr-45, Gly-47, and Gly-49. Residue His-65 is part of the active site. Residue Asp-66 participates in Ca(2+) binding. Asp-116 is an active-site residue.

The protein belongs to the phospholipase A2 family. Group I subfamily. D49 sub-subfamily. Ca(2+) is required as a cofactor. Expressed by the venom gland.

It localises to the secreted. The enzyme catalyses a 1,2-diacyl-sn-glycero-3-phosphocholine + H2O = a 1-acyl-sn-glycero-3-phosphocholine + a fatty acid + H(+). Functionally, PLA2 catalyzes the calcium-dependent hydrolysis of the 2-acyl groups in 3-sn-phosphoglycerides. This chain is Acidic phospholipase A2 KBf-grIB, found in Bungarus fasciatus (Banded krait).